We begin with the raw amino-acid sequence, 548 residues long: Membrane protein insertase YidC (548 aa).

The helical transmembrane segment at 6-26 (NLLVIALLFVSFMIWQAWEQD) threads the bilayer. The disordered stretch occupies residues 28 to 55 (NPQPQAQQTTQTTTTAAGSAADQGVPAS). Residues 30–50 (QPQAQQTTQTTTTAAGSAADQ) show a composition bias toward low complexity. 4 helical membrane passes run 350 to 370 (FVGN…GIMY), 420 to 440 (LGGC…YYML), 458 to 478 (LSAQ…MFFI), and 499 to 519 (PVIF…YYIV).

Belongs to the OXA1/ALB3/YidC family. Type 1 subfamily. Interacts with the Sec translocase complex via SecD. Specifically interacts with transmembrane segments of nascent integral membrane proteins during membrane integration.

The protein resides in the cell inner membrane. Its function is as follows. Required for the insertion and/or proper folding and/or complex formation of integral membrane proteins into the membrane. Involved in integration of membrane proteins that insert both dependently and independently of the Sec translocase complex, as well as at least some lipoproteins. Aids folding of multispanning membrane proteins. The polypeptide is Membrane protein insertase YidC (Escherichia coli O127:H6 (strain E2348/69 / EPEC)).